The primary structure comprises 503 residues: Maturase K (503 aa).

This sequence belongs to the intron maturase 2 family. MatK subfamily.

The protein localises to the plastid. Its subcellular location is the chloroplast. In terms of biological role, usually encoded in the trnK tRNA gene intron. Probably assists in splicing its own and other chloroplast group II introns. In Rubus ursinus (California blackberry), this protein is Maturase K.